A 267-amino-acid chain; its full sequence is Octanoyltransferase (267 aa).

Positions Met1 to Pro30 are disordered. The span at Met16 to Gln28 shows a compositional bias: polar residues. The BPL/LPL catalytic domain maps to Gly77–Gln265. Residues Arg116–His123, Ala196–Gly198, and Gly209–Ala211 each bind substrate. Catalysis depends on Cys227, which acts as the Acyl-thioester intermediate.

It belongs to the LipB family.

It is found in the cytoplasm. It catalyses the reaction octanoyl-[ACP] + L-lysyl-[protein] = N(6)-octanoyl-L-lysyl-[protein] + holo-[ACP] + H(+). The protein operates within protein modification; protein lipoylation via endogenous pathway; protein N(6)-(lipoyl)lysine from octanoyl-[acyl-carrier-protein]: step 1/2. Functionally, catalyzes the transfer of endogenously produced octanoic acid from octanoyl-acyl-carrier-protein onto the lipoyl domains of lipoate-dependent enzymes. Lipoyl-ACP can also act as a substrate although octanoyl-ACP is likely to be the physiological substrate. In Brucella abortus biovar 1 (strain 9-941), this protein is Octanoyltransferase.